A 230-amino-acid polypeptide reads, in one-letter code: Uracil-DNA glycosylase (230 aa).

The active-site Proton acceptor is the D70.

This sequence belongs to the uracil-DNA glycosylase (UDG) superfamily. UNG family.

It localises to the cytoplasm. It catalyses the reaction Hydrolyzes single-stranded DNA or mismatched double-stranded DNA and polynucleotides, releasing free uracil.. In terms of biological role, excises uracil residues from the DNA which can arise as a result of misincorporation of dUMP residues by DNA polymerase or due to deamination of cytosine. The chain is Uracil-DNA glycosylase from Pseudomonas savastanoi pv. phaseolicola (strain 1448A / Race 6) (Pseudomonas syringae pv. phaseolicola (strain 1448A / Race 6)).